The sequence spans 499 residues: Zinc finger protein PLAG1 (499 aa).

The segment at 1–33 (MATVIPGDLSEVRDTQKAPSGKRKRGESKPRKN) is disordered. The interaction with KPNA2 stretch occupies residues 2–84 (ATVIPGDLSE…SKYKLQRHMA (83 aa)). A Nuclear localization signal motif is present at residues 22 to 25 (KRKR). 7 C2H2-type zinc fingers span residues 34-56 (FPCQLCDKAFNSVEKLKVHSFSH), 62-86 (YKCTHQDCTKAFVSKYKLQRHMATH), 92-114 (HKCNYCEKMFHRKDHLKNHLHTH), 121-143 (FKCEECGKSYNTKLGFKRHLALH), 150-172 (LTCKVCLQTFESTGVLLEHLKSH), 185-207 (HQCEHCERRFYTRKDVRRHMVVH), and 213-236 (FLCQYCAQRFGRKDHLTRHMKKSH). A decreased nuclear import with localization in the nucleus but also in the cytoplasm region spans residues 41–242 (KAFNSVEKLK…KKSHNQELLK (202 aa)). The segment at 243-383 (VKTEPVDFLD…SQASSSKLGL (141 aa)) is repression domain; contains 3 sumoylation motifs and massively decrease transcription activity. Positions 243-499 (VKTEPVDFLD…TLPRFHQAFQ (257 aa)) are activates transcription; Inhibition of nuclear import due to lack of NLS and KPNA2 interaction. Glycyl lysine isopeptide (Lys-Gly) (interchain with G-Cter in SUMO) cross-links involve residues K244 and K263. The tract at residues 364–400 (QGGAPSSSQDSQASSSKLGLEPQSGSPDDGAGDLSLS) is disordered. Positions 369–379 (SSSQDSQASSS) are enriched in low complexity. Positions 384 to 499 (EPQSGSPDDG…TLPRFHQAFQ (116 aa)) are massively activates transcription.

It belongs to the krueppel C2H2-type zinc-finger protein family. Interacts with KPNA2, which escorts protein to the nucleus via interaction with nuclear localization signal. Interacts with E3 SUMO-protein ligase PIAS1, PIAS2 and PIAS4. Sumoylated with SUMO1; which inhibits transcriptional activity, but does not affect nuclear localization. Blockers of sumoylation pathway such as SENP3 and inactive UBE2I increases transcriptional capacity. Sumoylation is increased in the presence of PIAS1. Post-translationally, acetylated by lysine acetyltransferase EP300; which activates transcriptional capacity. Lysine residues that are sumoylated also seem to be target for acetylation. Expressed in heart, spleen, lung, kidney, brain, testis and epididymis but not in salivary glands.

It is found in the nucleus. In terms of biological role, transcription factor whose activation results in up-regulation of target genes, such as IGFII, leading to uncontrolled cell proliferation: when overexpressed in cultured cells, higher proliferation rate and transformation are observed. Other target genes such as CRLF1, CRABP2, CRIP2, PIGF are strongly induced in cells with PLAG1 induction. Proto-oncogene whose ectopic expression can trigger the development of pleomorphic adenomas of the salivary gland and lipoblastomas. Cooperates with CBFB-MYH11. The protein is Zinc finger protein PLAG1 (Plag1) of Rattus norvegicus (Rat).